Reading from the N-terminus, the 486-residue chain is Arginine/agmatine antiporter (486 aa).

Transmembrane regions (helical) follow at residues 12 to 32 (LGAIALAGMVISSMIGGGIFS), 41 to 61 (AGAGAIILAWILTGIGMFFIA), 85 to 105 (GFGPYVGFTIGWGYWLCQIFG), 129 to 149 (NTIPAIIGGSILIWVFNFIVL), 161 to 181 (IGTICKLIPLLIFIIITAFFF), 211 to 231 (STMLVTLWAFIGIEGAVVMSA), 242 to 262 (ATILGFSGCLIVYVLLSLLPF), 296 to 316 (IGLLIAILSSWLSWTVIVAEI), 341 to 361 (VSLYITSALMQVAMLLVYFST), 367 to 387 (MLSITGVMVLPAYLASAAFLV), 418 to 438 (IWLIYAGGIKYLFMAIVLLAL), and 461 to 481 (EVTKITIIAFLALLAIFLFST).

Belongs to the amino acid-polyamine-organocation (APC) superfamily. Basic amino acid/polyamine antiporter (APA) (TC 2.A.3.2) family.

It localises to the cell inner membrane. Catalyzes the exchange of L-arginine for agmatine. The arginine uptake by the bacterium in the macrophage may be a virulence factor against the host innate immune response. The polypeptide is Arginine/agmatine antiporter (aaxC) (Chlamydia felis (strain Fe/C-56) (Chlamydophila felis)).